A 349-amino-acid polypeptide reads, in one-letter code: AA9 family lytic polysaccharide monooxygenase A (349 aa).

A signal peptide spans 1–19 (MKSTFGLLALAAAAKLVSA). Residues His20 and His102 each coordinate Cu(2+). Cys62 and Cys183 are oxidised to a cystine. An O2-binding site is contributed by His169. Tyr180 lines the Cu(2+) pocket. Positions 233–304 (DGSSSGSSGS…SGSNSGSDSC (72 aa)) are disordered. 2 stretches are compositionally biased toward low complexity: residues 234–262 (GSSS…AVPT) and 269–304 (TSAT…SDSC). The 37-residue stretch at 311–347 (GSVKIYGQCGGQNYSGPTSCEAGLICKEWNPYYHQCV) folds into the CBM1 domain. Asn323 is a glycosylation site (N-linked (GlcNAc...) asparagine).

The protein belongs to the polysaccharide monooxygenase AA9 family. The cofactor is Cu(2+).

It is found in the secreted. The enzyme catalyses [(1-&gt;4)-beta-D-glucosyl]n+m + reduced acceptor + O2 = 4-dehydro-beta-D-glucosyl-[(1-&gt;4)-beta-D-glucosyl]n-1 + [(1-&gt;4)-beta-D-glucosyl]m + acceptor + H2O.. Functionally, lytic polysaccharide monooxygenase (LPMO) that depolymerizes crystalline and amorphous polysaccharides via the oxidation of scissile alpha- or beta-(1-4)-glycosidic bonds, yielding C4 oxidation products. Catalysis by LPMOs requires the reduction of the active-site copper from Cu(II) to Cu(I) by a reducing agent and H(2)O(2) or O(2) as a cosubstrate. The protein is AA9 family lytic polysaccharide monooxygenase A (eglD) of Aspergillus fumigatus (strain CBS 144.89 / FGSC A1163 / CEA10) (Neosartorya fumigata).